The following is a 284-amino-acid chain: Tripartite motif-containing protein 12A (284 aa).

Residues 15–59 form an RING-type zinc finger; it reads CPVCLNLMVKPVSADCGHTFCQGCITLYFESIKCDKKVFICPVCR. A B box-type zinc finger spans residues 91-132; sequence QKVFNCARHGKKLQLFCRKDMMAICWLCERSQEHRGHKTALI. Residues C96, H99, C118, and H124 each coordinate Zn(2+). Residues 130–234 adopt a coiled-coil conformation; the sequence is ALIEEVAQEY…QSKLLEDFIS (105 aa).

The protein belongs to the TRIM/RBCC family. As to expression, expressed in embryonic CNS, liver, kidney, olfactory epithelium.

The protein localises to the cytoplasm. This chain is Tripartite motif-containing protein 12A (Trim12a), found in Mus musculus (Mouse).